Here is a 597-residue protein sequence, read N- to C-terminus: Kelch-like protein 21 (597 aa).

In terms of domain architecture, BTB spans 35–103 (LDVTLEAAGG…SYTGRVAVSG (69 aa)). Residues 138–239 (CLDMQDFAEA…RRFYLLAHVE (102 aa)) enclose the BACK domain. 6 Kelch repeats span residues 287-335 (ILVL…ALGN), 336-382 (DIYV…VLDG), 384-422 (LYVV…ACRG), 423-470 (RLYA…TLNG), 472-512 (MYFV…VLGG), and 513-560 (KLYV…SIFR). Residues 570 to 597 (GRGFELDSGSDDMDPGRPRPPRDPDELH) form a disordered region. The span at 583–597 (DPGRPRPPRDPDELH) shows a compositional bias: basic and acidic residues.

Component of the BCR(KLHL21) E3 ubiquitin ligase complex, at least composed of CUL3, KLHL21 and RBX1.

The protein localises to the cytoplasm. The protein resides in the cytoskeleton. It localises to the spindle. The protein operates within protein modification; protein ubiquitination. In terms of biological role, substrate-specific adapter of a BCR (BTB-CUL3-RBX1) E3 ubiquitin-protein ligase complex required for efficient chromosome alignment and cytokinesis. The BCR(KLHL21) E3 ubiquitin ligase complex regulates localization of the chromosomal passenger complex (CPC) from chromosomes to the spindle midzone in anaphase and mediates the ubiquitination of AURKB. Ubiquitination of AURKB by BCR(KLHL21) E3 ubiquitin ligase complex may not lead to its degradation by the proteasome. This chain is Kelch-like protein 21 (KLHL21), found in Homo sapiens (Human).